A 558-amino-acid chain; its full sequence is ATP-dependent RNA helicase ROK1 (558 aa).

Residues 26 to 91 (PSAKQQQYEQ…EEAPPLEIQT (66 aa)) are disordered. Basic and acidic residues-rich tracts occupy residues 34-53 (EQHK…DFFH) and 64-81 (DSTD…KKED). A Q motif motif is present at residues 120-148 (DMIGRFRLDSKLLSNLLEAEFVEPTAIQC). The Helicase ATP-binding domain maps to 151 to 329 (LPISLSGRDL…HSIMRDPIRV (179 aa)). 164–171 (APTGSGKT) is a binding site for ATP. Residues 276–279 (DEAD) carry the DEAD box motif. A Helicase C-terminal domain is found at 340-504 (TIDQKLVFTG…GFSGWMENMT (165 aa)). The tract at residues 509–558 (NEKKKVKHKEIDRKDISTVPKLVKHKRKQREQMIEASKKRKQEETRNALQ) is disordered. Residues 538 to 558 (REQMIEASKKRKQEETRNALQ) are compositionally biased toward basic and acidic residues.

The protein belongs to the DEAD box helicase family. DDX52/ROK1 subfamily. As to quaternary structure, interacts with the U3 snoRNA and is associated with the 90S and 40S pre-ribosomes.

Its subcellular location is the nucleus. It localises to the nucleolus. The enzyme catalyses ATP + H2O = ADP + phosphate + H(+). Functionally, ATP-dependent RNA helicase involved in 40S ribosomal subunit biogenesis. Required for the processing and cleavage of 35S pre-rRNA at sites A0, A1, and A2, leading to mature 18S rRNA. This chain is ATP-dependent RNA helicase ROK1 (ROK1), found in Scheffersomyces stipitis (strain ATCC 58785 / CBS 6054 / NBRC 10063 / NRRL Y-11545) (Yeast).